We begin with the raw amino-acid sequence, 262 residues long: Acyl-[acyl-carrier-protein]--UDP-N-acetylglucosamine O-acyltransferase (262 aa).

The protein belongs to the transferase hexapeptide repeat family. LpxA subfamily. As to quaternary structure, homotrimer.

The protein localises to the cytoplasm. It carries out the reaction a (3R)-hydroxyacyl-[ACP] + UDP-N-acetyl-alpha-D-glucosamine = a UDP-3-O-[(3R)-3-hydroxyacyl]-N-acetyl-alpha-D-glucosamine + holo-[ACP]. It participates in glycolipid biosynthesis; lipid IV(A) biosynthesis; lipid IV(A) from (3R)-3-hydroxytetradecanoyl-[acyl-carrier-protein] and UDP-N-acetyl-alpha-D-glucosamine: step 1/6. Involved in the biosynthesis of lipid A, a phosphorylated glycolipid that anchors the lipopolysaccharide to the outer membrane of the cell. This chain is Acyl-[acyl-carrier-protein]--UDP-N-acetylglucosamine O-acyltransferase, found in Vibrio parahaemolyticus serotype O3:K6 (strain RIMD 2210633).